The chain runs to 156 residues: Small ribosomal subunit protein uS7 (156 aa).

It belongs to the universal ribosomal protein uS7 family. As to quaternary structure, part of the 30S ribosomal subunit. Contacts proteins S9 and S11.

One of the primary rRNA binding proteins, it binds directly to 16S rRNA where it nucleates assembly of the head domain of the 30S subunit. Is located at the subunit interface close to the decoding center, probably blocks exit of the E-site tRNA. The protein is Small ribosomal subunit protein uS7 of Thermobifida fusca (strain YX).